The sequence spans 150 residues: Macrodomain Ter protein (150 aa).

The protein belongs to the MatP family. In terms of assembly, homodimer.

It localises to the cytoplasm. Its function is as follows. Required for spatial organization of the terminus region of the chromosome (Ter macrodomain) during the cell cycle. Prevents early segregation of duplicated Ter macrodomains during cell division. Binds specifically to matS, which is a 13 bp signature motif repeated within the Ter macrodomain. In Citrobacter koseri (strain ATCC BAA-895 / CDC 4225-83 / SGSC4696), this protein is Macrodomain Ter protein.